The primary structure comprises 240 residues: Ubiquinone biosynthesis O-methyltransferase (240 aa).

Residues Arg-44, Gly-64, Asp-85, and Met-129 each contribute to the S-adenosyl-L-methionine site.

This sequence belongs to the methyltransferase superfamily. UbiG/COQ3 family.

The catalysed reaction is a 3-demethylubiquinol + S-adenosyl-L-methionine = a ubiquinol + S-adenosyl-L-homocysteine + H(+). The enzyme catalyses a 3-(all-trans-polyprenyl)benzene-1,2-diol + S-adenosyl-L-methionine = a 2-methoxy-6-(all-trans-polyprenyl)phenol + S-adenosyl-L-homocysteine + H(+). It functions in the pathway cofactor biosynthesis; ubiquinone biosynthesis. In terms of biological role, O-methyltransferase that catalyzes the 2 O-methylation steps in the ubiquinone biosynthetic pathway. The chain is Ubiquinone biosynthesis O-methyltransferase from Escherichia fergusonii (strain ATCC 35469 / DSM 13698 / CCUG 18766 / IAM 14443 / JCM 21226 / LMG 7866 / NBRC 102419 / NCTC 12128 / CDC 0568-73).